Reading from the N-terminus, the 131-residue chain is Profilin-1 (131 aa).

This sequence belongs to the profilin family. As to quaternary structure, occurs in many kinds of cells as a complex with monomeric actin in a 1:1 ratio.

Its subcellular location is the cytoplasm. The protein localises to the cytoskeleton. Its function is as follows. Binds to actin and affects the structure of the cytoskeleton. At high concentrations, profilin prevents the polymerization of actin, whereas it enhances it at low concentrations. By binding to PIP2, it inhibits the formation of IP3 and DG. This Hordeum vulgare (Barley) protein is Profilin-1 (PRO1).